The chain runs to 90 residues: Putative sodium channel toxin Ts28 (90 aa).

An N-terminal signal peptide occupies residues 1 to 23 (MKISLVTWLITALCLMEIEEIDG). An LCN-type CS-alpha/beta domain is found at 26–86 (PGNYPVDFQG…FWDVMKKQCD (61 aa)). 3 cysteine pairs are disulfide-bonded: Cys-40–Cys-60, Cys-46–Cys-65, and Cys-50–Cys-67.

The protein belongs to the long (3 C-C) scorpion toxin superfamily. Monomer (edited version) and heterodimer (non-edited version) of this alpha chain and a beta chain (AC P0CI43). In terms of tissue distribution, expressed by the venom gland.

Its subcellular location is the secreted. The edited BmKBTx-like may modulate voltage-gated sodium channels (Nav). In terms of biological role, the non-edited form is able to form a heterodimer. In orthologs, a heterodimer with LVP beta-chain induces lipolysis in rat adipocytes, which is mediated through the beta-2 adrenergic receptor pathway (ADRB2). Since no LVP beta-chains have been identified in the venom of this scorpion, it is possible that this protein is not involved in a lipolysis process. The polypeptide is Putative sodium channel toxin Ts28 (Tityus serrulatus (Brazilian scorpion)).